Consider the following 342-residue polypeptide: N-acetyl-gamma-glutamyl-phosphate reductase (342 aa).

C147 is a catalytic residue.

It belongs to the NAGSA dehydrogenase family. Type 1 subfamily.

It is found in the cytoplasm. The catalysed reaction is N-acetyl-L-glutamate 5-semialdehyde + phosphate + NADP(+) = N-acetyl-L-glutamyl 5-phosphate + NADPH + H(+). It functions in the pathway amino-acid biosynthesis; L-arginine biosynthesis; N(2)-acetyl-L-ornithine from L-glutamate: step 3/4. In terms of biological role, catalyzes the NADPH-dependent reduction of N-acetyl-5-glutamyl phosphate to yield N-acetyl-L-glutamate 5-semialdehyde. The protein is N-acetyl-gamma-glutamyl-phosphate reductase of Campylobacter jejuni (strain RM1221).